Consider the following 679-residue polypeptide: DNA ligase (679 aa).

NAD(+) is bound by residues 43 to 47, 92 to 93, and glutamate 124; these read DYVYD and SM. Residue lysine 126 is the N6-AMP-lysine intermediate of the active site. The NAD(+) site is built by arginine 147, glutamate 181, lysine 297, and lysine 321. Cysteine 415, cysteine 418, cysteine 433, and cysteine 438 together coordinate Zn(2+). A BRCT domain is found at 599–679; it reads TESAEWAGKR…RFDQAMKEEN (81 aa).

Belongs to the NAD-dependent DNA ligase family. LigA subfamily. The cofactor is Mg(2+). Requires Mn(2+) as cofactor.

It catalyses the reaction NAD(+) + (deoxyribonucleotide)n-3'-hydroxyl + 5'-phospho-(deoxyribonucleotide)m = (deoxyribonucleotide)n+m + AMP + beta-nicotinamide D-nucleotide.. Functionally, DNA ligase that catalyzes the formation of phosphodiester linkages between 5'-phosphoryl and 3'-hydroxyl groups in double-stranded DNA using NAD as a coenzyme and as the energy source for the reaction. It is essential for DNA replication and repair of damaged DNA. The protein is DNA ligase of Limosilactobacillus fermentum (strain NBRC 3956 / LMG 18251) (Lactobacillus fermentum).